The primary structure comprises 473 residues: ATP synthase subunit beta (473 aa).

158–165 (GGAGVGKT) is an ATP binding site.

This sequence belongs to the ATPase alpha/beta chains family. In terms of assembly, F-type ATPases have 2 components, CF(1) - the catalytic core - and CF(0) - the membrane proton channel. CF(1) has five subunits: alpha(3), beta(3), gamma(1), delta(1), epsilon(1). CF(0) has three main subunits: a(1), b(2) and c(9-12). The alpha and beta chains form an alternating ring which encloses part of the gamma chain. CF(1) is attached to CF(0) by a central stalk formed by the gamma and epsilon chains, while a peripheral stalk is formed by the delta and b chains.

The protein localises to the cell membrane. The enzyme catalyses ATP + H2O + 4 H(+)(in) = ADP + phosphate + 5 H(+)(out). Produces ATP from ADP in the presence of a proton gradient across the membrane. The catalytic sites are hosted primarily by the beta subunits. This Bacillus caldotenax protein is ATP synthase subunit beta.